A 204-amino-acid chain; its full sequence is ATP phosphoribosyltransferase (204 aa).

The protein belongs to the ATP phosphoribosyltransferase family. Short subfamily. As to quaternary structure, heteromultimer composed of HisG and HisZ subunits.

It is found in the cytoplasm. It carries out the reaction 1-(5-phospho-beta-D-ribosyl)-ATP + diphosphate = 5-phospho-alpha-D-ribose 1-diphosphate + ATP. It participates in amino-acid biosynthesis; L-histidine biosynthesis; L-histidine from 5-phospho-alpha-D-ribose 1-diphosphate: step 1/9. In terms of biological role, catalyzes the condensation of ATP and 5-phosphoribose 1-diphosphate to form N'-(5'-phosphoribosyl)-ATP (PR-ATP). Has a crucial role in the pathway because the rate of histidine biosynthesis seems to be controlled primarily by regulation of HisG enzymatic activity. The polypeptide is ATP phosphoribosyltransferase (Hydrogenobaculum sp. (strain Y04AAS1)).